The chain runs to 245 residues: tRNA pseudouridine synthase A (245 aa).

D52 serves as the catalytic Nucleophile. Position 111 (Y111) interacts with substrate.

It belongs to the tRNA pseudouridine synthase TruA family. As to quaternary structure, homodimer.

It catalyses the reaction uridine(38/39/40) in tRNA = pseudouridine(38/39/40) in tRNA. In terms of biological role, formation of pseudouridine at positions 38, 39 and 40 in the anticodon stem and loop of transfer RNAs. This Afipia carboxidovorans (strain ATCC 49405 / DSM 1227 / KCTC 32145 / OM5) (Oligotropha carboxidovorans) protein is tRNA pseudouridine synthase A.